A 413-amino-acid polypeptide reads, in one-letter code: MTPIRHLTILGSTGSIGESTLDVVARHPDRFQAVALTADKNVEKMFEQCKRFYPSYAVMLNAQSAEQLEAKLRVAGLGTMVLSGIESLEKVASLPEIDTVMAAIVGAAGIRPTLSAAQAGKHILLANKETLVMAGRIFMDTIRQYHATLLPIDSEHNAIFQSLPQHYNGDLISSGVRRILLTASGGPFHKADLQTLSTVTPEQACAHPNWVMGRKISVDSATMMNKGLEVIEAHWLFNVEPEKIQVVVHPQSVIHSMVEYIDGSVLAQLGNPDMRTPIAHALGYPERIESGVQSMDIFKIAQLNFEAPDFERFPCLRLAYEALSKGGNMPAVLNAANEVAVEVFLAGKIPFTVIPAIIEHVMESIDRQEITDLEDVLAADLRARETARKWLDTQAWQRGQSGAPLFRAEQWNG.

Positions 13, 14, 15, 16, 40, 41, and 127 each coordinate NADPH. Lysine 128 lines the 1-deoxy-D-xylulose 5-phosphate pocket. Glutamate 129 provides a ligand contact to NADPH. Aspartate 153 contacts Mn(2+). 1-deoxy-D-xylulose 5-phosphate contacts are provided by serine 154, glutamate 155, serine 184, and histidine 207. Glutamate 155 is a binding site for Mn(2+). Glycine 213 contacts NADPH. Serine 220, asparagine 225, lysine 226, and glutamate 229 together coordinate 1-deoxy-D-xylulose 5-phosphate. Residue glutamate 229 coordinates Mn(2+).

This sequence belongs to the DXR family. It depends on Mg(2+) as a cofactor. The cofactor is Mn(2+).

The enzyme catalyses 2-C-methyl-D-erythritol 4-phosphate + NADP(+) = 1-deoxy-D-xylulose 5-phosphate + NADPH + H(+). Its pathway is isoprenoid biosynthesis; isopentenyl diphosphate biosynthesis via DXP pathway; isopentenyl diphosphate from 1-deoxy-D-xylulose 5-phosphate: step 1/6. Its function is as follows. Catalyzes the NADPH-dependent rearrangement and reduction of 1-deoxy-D-xylulose-5-phosphate (DXP) to 2-C-methyl-D-erythritol 4-phosphate (MEP). The polypeptide is 1-deoxy-D-xylulose 5-phosphate reductoisomerase (Nitrosomonas eutropha (strain DSM 101675 / C91 / Nm57)).